A 291-amino-acid chain; its full sequence is MASKQLKLVIITGMSGAGKTVAMQSLEDLGYFCVDNLPPSLLPKFWELMKESDKMDKIALVMDLRGREFFDSIEPALDELDNTNFITTKILFLEADDKVLVSRYKETRRHHPLEPNGSVLDGINAERELLSDLKGRSQLVINTSNMAPRELRERINNEFQTEDKDIFNVQLMSFGFKYGIPIDADLVFDVRFLPNPHYIDKMRPLTGLDEDVYEYVMKWPETQTFLDKLVDLLMFTLPFYKREGKTQLVIAIGCTGGQHRSVALTEFVGKAIQQKYETTISHRDMKRRKGR.

Gly-13 to Thr-20 provides a ligand contact to ATP. Asp-63–Gly-66 lines the GTP pocket.

This sequence belongs to the RapZ-like family.

Displays ATPase and GTPase activities. The polypeptide is Nucleotide-binding protein Lm4b_02443 (Listeria monocytogenes serotype 4b (strain CLIP80459)).